Here is an 873-residue protein sequence, read N- to C-terminus: Alanine--tRNA ligase (873 aa).

Zn(2+)-binding residues include His563, His567, Cys665, and His669.

The protein belongs to the class-II aminoacyl-tRNA synthetase family. Zn(2+) serves as cofactor.

Its subcellular location is the cytoplasm. The catalysed reaction is tRNA(Ala) + L-alanine + ATP = L-alanyl-tRNA(Ala) + AMP + diphosphate. Its function is as follows. Catalyzes the attachment of alanine to tRNA(Ala) in a two-step reaction: alanine is first activated by ATP to form Ala-AMP and then transferred to the acceptor end of tRNA(Ala). Also edits incorrectly charged Ser-tRNA(Ala) and Gly-tRNA(Ala) via its editing domain. This Parabacteroides distasonis (strain ATCC 8503 / DSM 20701 / CIP 104284 / JCM 5825 / NCTC 11152) protein is Alanine--tRNA ligase.